Consider the following 200-residue polypeptide: Pyridoxamine 5'-phosphate oxidase homolog (200 aa).

Phe-60, Lys-68, and Asn-125 together coordinate FMN.

It belongs to the pyridoxamine 5'-phosphate oxidase family. The cofactor is FMN.

Its subcellular location is the cytoplasm. It localises to the nucleus. This chain is Pyridoxamine 5'-phosphate oxidase homolog, found in Saccharomyces cerevisiae (strain ATCC 204508 / S288c) (Baker's yeast).